The chain runs to 398 residues: Protein ELC (398 aa).

One can recognise a UEV domain in the interval 18 to 162 (ALSQRGPSSV…ARDPPLYSRR (145 aa)). Residues 157–202 (PLYSRRRPQPPPPSPPTVYDSSLSRPPSADQSLPRPFPPSPYGGGV) form a disordered region. Positions 175–187 (YDSSLSRPPSADQ) are enriched in polar residues. Residues 247 to 291 (EAEAEELLSLQAGLKRREDELNIGLKEMVEEKETLEQQLQIISMN) are a coiled coil. The 69-residue stretch at 322–390 (DTLSKQMLEC…RAAQMEVQVA (69 aa)) folds into the SB domain.

Belongs to the ubiquitin-conjugating enzyme family. UEV subfamily. In terms of assembly, component of the endosomal sorting required for transport complex I (ESCRT-I), composed of ELC, VPS28 and VPS37. Interacts with VPS28 and VPS37. Binds ubiquitin in vitro. Interacts with FREE1. Interacts with TOL9/TOM1D. Interacts with BRO1/ALIX. Interacts with SINAT1, SINAT2, SINAT3 and SINAT4. Post-translationally, ubiquitinated by SINAT1, SINAT2, SINAT3 and SINAT4 for subsequent proteasomal degradation. In terms of tissue distribution, expressed in roots, stems, leaves and flowers.

The protein localises to the early endosome. It is found in the late endosome. Its subcellular location is the prevacuolar compartment. Functionally, component of the ESCRT-I complex (endosomal sorting complex required for transport I), a regulator of vesicular trafficking process. Required for the sorting of endocytic ubiquitinated cargos into multivesicular bodies (MVBs). May control nuclear division through the microtubule cytoskeleton. The chain is Protein ELC from Arabidopsis thaliana (Mouse-ear cress).